Here is a 557-residue protein sequence, read N- to C-terminus: Dihydroxy-acid dehydratase 2 (557 aa).

Cys-50 lines the [2Fe-2S] cluster pocket. Asp-82 contacts Mg(2+). Residue Cys-123 coordinates [2Fe-2S] cluster. 2 residues coordinate Mg(2+): Asp-124 and Lys-125. N6-carboxylysine is present on Lys-125. Cys-195 is a [2Fe-2S] cluster binding site. Glu-447 lines the Mg(2+) pocket. Ser-473 serves as the catalytic Proton acceptor.

The protein belongs to the IlvD/Edd family. Homodimer. Requires [2Fe-2S] cluster as cofactor. The cofactor is Mg(2+).

It catalyses the reaction (2R)-2,3-dihydroxy-3-methylbutanoate = 3-methyl-2-oxobutanoate + H2O. It carries out the reaction (2R,3R)-2,3-dihydroxy-3-methylpentanoate = (S)-3-methyl-2-oxopentanoate + H2O. It participates in amino-acid biosynthesis; L-isoleucine biosynthesis; L-isoleucine from 2-oxobutanoate: step 3/4. It functions in the pathway amino-acid biosynthesis; L-valine biosynthesis; L-valine from pyruvate: step 3/4. Functions in the biosynthesis of branched-chain amino acids. Catalyzes the dehydration of (2R,3R)-2,3-dihydroxy-3-methylpentanoate (2,3-dihydroxy-3-methylvalerate) into 2-oxo-3-methylpentanoate (2-oxo-3-methylvalerate) and of (2R)-2,3-dihydroxy-3-methylbutanoate (2,3-dihydroxyisovalerate) into 2-oxo-3-methylbutanoate (2-oxoisovalerate), the penultimate precursor to L-isoleucine and L-valine, respectively. This Burkholderia lata (strain ATCC 17760 / DSM 23089 / LMG 22485 / NCIMB 9086 / R18194 / 383) protein is Dihydroxy-acid dehydratase 2.